Reading from the N-terminus, the 291-residue chain is Elongation factor Ts, mitochondrial (291 aa).

This sequence belongs to the EF-Ts family.

Its subcellular location is the mitochondrion. Its function is as follows. Associates with the EF-Tu.GDP complex and induces the exchange of GDP to GTP. It remains bound to the aminoacyl-tRNA.EF-Tu.GTP complex up to the GTP hydrolysis stage on the ribosome. The protein is Elongation factor Ts, mitochondrial of Nematostella vectensis (Starlet sea anemone).